The chain runs to 341 residues: Cell division protein ZipA (341 aa).

Over 1–6 (MENLQL) the chain is Periplasmic. The chain crosses the membrane as a helical span at residues 7–27 (VLFVLGAIAIVAVLVHGFWSI). Residues 28–341 (RKQQPKSLKE…YLQRIRTQNS (314 aa)) lie on the Cytoplasmic side of the membrane. Disordered stretches follow at residues 35 to 134 (LKES…PVLS) and 157 to 201 (QSSL…PEPE). The span at 90–100 (TLTSEGQMDSS) shows a compositional bias: polar residues. The span at 175 to 190 (SIEVPEPVSEPVLESV) shows a compositional bias: low complexity. Over residues 192 to 201 (EPEPVAPEPE) the composition is skewed to pro residues.

It belongs to the ZipA family. As to quaternary structure, interacts with FtsZ via their C-terminal domains.

The protein resides in the cell inner membrane. Functionally, essential cell division protein that stabilizes the FtsZ protofilaments by cross-linking them and that serves as a cytoplasmic membrane anchor for the Z ring. Also required for the recruitment to the septal ring of downstream cell division proteins. In Shewanella sediminis (strain HAW-EB3), this protein is Cell division protein ZipA.